A 319-amino-acid polypeptide reads, in one-letter code: ATP-dependent 6-phosphofructokinase (319 aa).

Gly11 provides a ligand contact to ATP. 21–25 (RAVVR) is an ADP binding site. ATP is bound by residues 72 to 73 (RC) and 102 to 105 (GDGS). Residue Asp103 coordinates Mg(2+). 125-127 (TID) is a substrate binding site. The active-site Proton acceptor is the Asp127. Residue Arg154 participates in ADP binding. Residues Arg162 and 169-171 (MGR) each bind substrate. ADP contacts are provided by residues 185–187 (GAE), Arg211, and 213–215 (KKH). Residues Glu222, Arg243, and 249 to 252 (HIQR) each bind substrate.

This sequence belongs to the phosphofructokinase type A (PFKA) family. ATP-dependent PFK group I subfamily. Prokaryotic clade 'B1' sub-subfamily. As to quaternary structure, homotetramer. It depends on Mg(2+) as a cofactor.

The protein localises to the cytoplasm. It catalyses the reaction beta-D-fructose 6-phosphate + ATP = beta-D-fructose 1,6-bisphosphate + ADP + H(+). Its pathway is carbohydrate degradation; glycolysis; D-glyceraldehyde 3-phosphate and glycerone phosphate from D-glucose: step 3/4. With respect to regulation, allosterically activated by ADP and other diphosphonucleosides, and allosterically inhibited by phosphoenolpyruvate. Its function is as follows. Catalyzes the phosphorylation of D-fructose 6-phosphate to fructose 1,6-bisphosphate by ATP, the first committing step of glycolysis. The chain is ATP-dependent 6-phosphofructokinase from Shouchella clausii (strain KSM-K16) (Alkalihalobacillus clausii).